We begin with the raw amino-acid sequence, 314 residues long: 3'-5' exoribonuclease YhaM (314 aa).

In terms of domain architecture, HD spans His-163 to Lys-279.

The protein belongs to the YhaM family.

Its function is as follows. Shows a 3'-5' exoribonuclease activity. The protein is 3'-5' exoribonuclease YhaM of Bacillus anthracis (strain CDC 684 / NRRL 3495).